The sequence spans 385 residues: 1-deoxy-D-xylulose 5-phosphate reductoisomerase (385 aa).

The NADPH site is built by Thr-10, Gly-11, Ser-12, Ile-13, and Asn-124. Lys-125 serves as a coordination point for 1-deoxy-D-xylulose 5-phosphate. Glu-126 contacts NADPH. Asp-150 provides a ligand contact to Mn(2+). Ser-151, Glu-152, Ser-176, and His-199 together coordinate 1-deoxy-D-xylulose 5-phosphate. Position 152 (Glu-152) interacts with Mn(2+). Gly-205 is an NADPH binding site. 1-deoxy-D-xylulose 5-phosphate-binding residues include Ser-212, Asn-217, Lys-218, and Glu-221. Glu-221 serves as a coordination point for Mn(2+).

This sequence belongs to the DXR family. Mg(2+) serves as cofactor. Requires Mn(2+) as cofactor.

It catalyses the reaction 2-C-methyl-D-erythritol 4-phosphate + NADP(+) = 1-deoxy-D-xylulose 5-phosphate + NADPH + H(+). The protein operates within isoprenoid biosynthesis; isopentenyl diphosphate biosynthesis via DXP pathway; isopentenyl diphosphate from 1-deoxy-D-xylulose 5-phosphate: step 1/6. Functionally, catalyzes the NADPH-dependent rearrangement and reduction of 1-deoxy-D-xylulose-5-phosphate (DXP) to 2-C-methyl-D-erythritol 4-phosphate (MEP). This Clostridium botulinum (strain Eklund 17B / Type B) protein is 1-deoxy-D-xylulose 5-phosphate reductoisomerase.